The sequence spans 178 residues: Nicotinamide-nucleotide adenylyltransferase (178 aa).

This sequence belongs to the archaeal NMN adenylyltransferase family.

Its subcellular location is the cytoplasm. It carries out the reaction beta-nicotinamide D-ribonucleotide + ATP + H(+) = diphosphate + NAD(+). Its pathway is cofactor biosynthesis; NAD(+) biosynthesis; NAD(+) from nicotinamide D-ribonucleotide: step 1/1. This Pyrobaculum neutrophilum (strain DSM 2338 / JCM 9278 / NBRC 100436 / V24Sta) (Thermoproteus neutrophilus) protein is Nicotinamide-nucleotide adenylyltransferase.